Consider the following 985-residue polypeptide: MKTLRARFKKTEGQDWGKSDQRLLQAVENNDVARVASLIAHKGLVPTKLDPEGKSAFHLAAMRGAAGCLEVMLAQGADVMSTDGAGYNALHLAAKYGHPECLKQLLEASCVVDIEDSSGWTALHHAAAGGCLSCSKLLCSFKAHMNPRDRSGATPLIIAAQMCHTDLCRLLLQQGAATNDQDLQGRTALMLACEGGSPETVEVLLQGGAQLSITDALGQDATHYGALTGDKLILQLLHESARRSSPPSASLEEDSGEASSQNSVSSHEKQGAPKKRKAPQPPASTPVPDDRDAYEEIVRLRQERGRLLQKIRGLEQHKERRRKEPLEAEASSVHSLERQVQELQQMLAEKQEEKESLGREVESLQSRLSLLENERENTSYDVATLQDEEGEMPDFPGADALMPKNQSPSAEEIVASLQEQVAQLTRQNQELLEKVQILEEFEKDEAQMAEESQAEVVPLVLYESLRAELEQLRRQYTEAMHSQQQQQEGEPPRAQEGEETAYQEIKDKGITIQNGPSVPDLNGTTYAETKANGMELQAGGSKGVWNTEAGVSEAAPIEPEAAGSEATGKDRLAAKEMDTSATMAEALNVKALGDNAESEPVAAEDTGGKENPGMKADEVDVLAQAGLTGTVIRNMEAIGVRDTGIQATGLEAKAVKTTGVQATVAEVIGVKVTGVQTTAIEAIGVKDTTQVATGAQADCWQATEADCTGAQDTAMEPTGAQATVTETTEAETSGTEDPCAAILHPGAAAAALQAELETRIRGLEEALRRREREAAAELEAARGRFAEAEEAARGRSRELEALRELLATATATGERARTEAAELRQALAASEARVAELSSTVDAAREELERMRGASVPADEHEHALSALRDHVTRLQAQLADLARRHEKTSAEVFQITDLSKEVFTLKEALKVQQSTPASSKEEEALRGQVTALQQQIQEEAREHGAVVALYRTHLLYAIQGQMDEDVQCILSQILQMQRLQAQGR.

5 ANK repeats span residues 52 to 81, 85 to 114, 118 to 147, 151 to 180, and 184 to 213; these read EGKS…DVMS, AGYN…VVDI, SGWT…HMNP, SGAT…ATND, and QGRT…QLSI. 5 disordered regions span residues 243 to 293, 311 to 360, 386 to 412, 476 to 503, and 594 to 614; these read RSSP…DRDA, IRGL…LGRE, QDEE…SAEE, YTEA…TAYQ, and DNAE…NPGM. The stretch at 291–488 forms a coiled coil; the sequence is RDAYEEIVRL…AMHSQQQQQE (198 aa). 2 stretches are compositionally biased toward basic and acidic residues: residues 311–326 and 349–360; these read IRGL…KEPL and EKQEEKESLGRE.

In terms of assembly, homodimer. Interacts (via C-terminal domain) with TRIOBP (via C-terminal domain) isoform 4; recruits TRIOBP isoform 4 to stereocilia rootlets. As to expression, expressed in vestibular hair bundles.

The protein resides in the cell membrane. Its subcellular location is the cell projection. It is found in the stereocilium. Its function is as follows. Component of the stereocilia rootlet in hair cells of inner ear. Bridges the apical plasma membrane with the lower rootlet and maintains normal distribution of TRIOBP, thereby reinforcing stereocilia insertion points and organizing rootlets for hearing with long-term resilience. The sequence is that of Ankyrin repeat domain-containing protein 24 (Ankrd24) from Mus musculus (Mouse).